The sequence spans 341 residues: Adenosine deaminase (341 aa).

Zn(2+) is bound by residues H15 and H17. Residues H17, D19, and G172 each contribute to the substrate site. H199 is a binding site for Zn(2+). Residue E202 is the Proton donor of the active site. Residue D279 participates in Zn(2+) binding.

It belongs to the metallo-dependent hydrolases superfamily. Adenosine and AMP deaminases family. Adenosine deaminase subfamily. Zn(2+) serves as cofactor.

The catalysed reaction is adenosine + H2O + H(+) = inosine + NH4(+). The enzyme catalyses 2'-deoxyadenosine + H2O + H(+) = 2'-deoxyinosine + NH4(+). In terms of biological role, catalyzes the hydrolytic deamination of adenosine and 2-deoxyadenosine. The sequence is that of Adenosine deaminase from Streptococcus equi subsp. zooepidemicus (strain MGCS10565).